The chain runs to 891 residues: MSSKDISSKSPSGNDALNDKKGTKTSETNDRNSTNNTKERDELEDLSEEDLQLKNDLELLVQAVQDATPELVGSSLTQLKEIIRTSTSSMTAVPKPLKFLRPHYFTLVKIYDSWPQSPQKTQLADILSVLGMSYSNTSKHESLKYRLQGVTTDPSLWGHEYVRHLASEIEEEFASRQEEEAPTDDLMELALTIVPFFLTHNAEADAIDLLQELGAIEKVVPFVELDNASRVCLYITSCVNLLPFPEDVAMLRTAHAIYRKFDQLTQALNVAIRLDDMSLIKEDCEAATDPLLKKQMSYMLARQQIPMDMGDEELNDALNNTHLSDHFHYLGKELNLMDPKVPEDIFKTHLEVARTGLGASGVYSAKQNLANTFVNALVNAGYSNDRLILVDDEKTSWIYKNKESGLISATASIGLLQLWNVDMGLSLLDKYLYSSEENTKAGALLGIGVTNVAVRNEADPAMAILSEYLETGSVKLRASAILGLGLAYSGANREDLLDMLSPIVTDTDCPMQLSCLAALSLGLIFVGTCNGDVASTILQTLMEREESAQNDQWGRFMALGLALLFNGKQDLADATVETLKAIEGKIARQAEILVDICSYAGTGNVLHIQKLLHICSEPPSDDAKESETTIQTFAALGVATIAMGEDIGAEMVLRHFDHMMHYGEPSIRKAIPLALGLLSASNPQMRIFDTLSRYSHDNDLDVAYNAIFAMGLVGAGTSNARLAQLLRQLASYYHKESNALFMVRIAQGLLYLGKGTMTLNPYHTERQILGQTAFAGLMTVVLAMLDANTFVLDTSHWLLYAITLAIRPRMLITLGEDGQYLPVSVRVGQAVDVVGQAGRPKVITGWVTHTTPVLLHHNERAELATEAYTPLTSLEGIVILKKNTEDIEMTA.

Positions 1–12 (MSSKDISSKSPS) are enriched in low complexity. The interval 1–48 (MSSKDISSKSPSGNDALNDKKGTKTSETNDRNSTNNTKERDELEDLSE) is disordered. S10 carries the post-translational modification Phosphoserine. The segment covering 17–30 (LNDKKGTKTSETND) has biased composition (basic and acidic residues). PC repeat units lie at residues 408 to 441 (SATA…NTKA), 442 to 478 (GALL…KLRA), 479 to 513 (SAIL…PMQL), 517 to 550 (AALS…SAQN), 673 to 704 (LALG…DVAY), and 705 to 739 (NAIF…ESNA).

The protein belongs to the proteasome subunit S2 family. Component of the 26S proteasome. Interacts with ubp6.

Acts as a regulatory subunit of the 26 proteasome which is involved in the ATP-dependent degradation of ubiquitinated proteins. In Schizosaccharomyces pombe (strain 972 / ATCC 24843) (Fission yeast), this protein is 26S proteasome regulatory subunit rpn1 (rpn1).